A 633-amino-acid polypeptide reads, in one-letter code: Protein BZZ1 (633 aa).

The F-BAR domain maps to 5–271 (LSIGNEIKDS…VVKQNKPSLN (267 aa)). The stretch at 138-210 (DMVNKKDNIY…INQANRTKDK (73 aa)) forms a coiled coil. A phosphoserine mark is found at Ser327, Ser463, Ser472, and Ser476. The segment at 429 to 495 (VDSKPSSGGS…KKTTQNSSDD (67 aa)) is disordered. Residues 474-493 (NNSIRTTSTNNTKKTTQNSS) show a composition bias toward low complexity. SH3 domains follow at residues 493 to 555 (SDDG…ISSA) and 577 to 633 (LPVR…SYCK).

This sequence belongs to the BZZ1 family. As to quaternary structure, interacts with LAS17 and MYO5.

It localises to the cytoplasm. The protein resides in the cytoskeleton. Its subcellular location is the actin patch. In terms of biological role, plays a role in endocytosis and trafficking to the vacuole. Functions with type I myosins to restore polarity of the actin cytoskeleton after NaCl stress. This is Protein BZZ1 (BZZ1) from Saccharomyces cerevisiae (strain ATCC 204508 / S288c) (Baker's yeast).